The sequence spans 1674 residues: Kinesin-like protein KIF21A (1674 aa).

Residue Met-1 is modified to N-acetylmethionine. The Kinesin motor domain occupies 9–371 (SVRVAVRIRP…LKYANRARNI (363 aa)). 88 to 95 (GQTGAGKT) is an ATP binding site. A coiled-coil region spans residues 365 to 575 (ANRARNIKNK…NREERSVAGK (211 aa)). Ser-524 carries the phosphoserine modification. Disordered stretches follow at residues 556–641 (KKRL…DEKA), 779–804 (EEQE…DQRK), and 841–881 (SDKV…AQQK). Over residues 560 to 597 (QKLEESNREERSVAGKEDNTDTDQEKKEEKGVSERENN) the composition is skewed to basic and acidic residues. Residues 598–637 (ELEVEESQEVSDHEDEEEEEEEEEDDIDGGESSDESDSES) are compositionally biased toward acidic residues. Polar residues predominate over residues 851–865 (KLSSSDAPAQDTGSS). 2 coiled-coil regions span residues 931-1019 (TDII…AKEE) and 1053-1083 (LQAA…NQLL). The tract at residues 1116-1138 (VEDSTDEDAPLNSPGSEGSTLSS) is disordered. Over residues 1128–1138 (SPGSEGSTLSS) the composition is skewed to polar residues. Residues 1146 to 1167 (EVKPKNKARRRTTTQMELLYAD) are interaction with KANK1 and KANK2. Polar residues-rich tracts occupy residues 1170 to 1179 (ELASDTSTGD) and 1196 to 1205 (GMNTETSGTS). Positions 1170–1318 (ELASDTSTGD…SSLSEVHRSS (149 aa)) are disordered. 4 positions are modified to phosphoserine: Ser-1212, Ser-1225, Ser-1229, and Ser-1239. Basic and acidic residues predominate over residues 1245–1262 (KAYEKAEKSKAKEQKHSD). A compositionally biased stretch (polar residues) spans 1288-1297 (NRLTVSQGNT). WD repeat units lie at residues 1345–1382 (GHTK…EIMS), 1385–1423 (GHPN…KCIR), 1449–1487 (SGEN…STGK), 1490–1532 (GHLG…LGTV), 1541–1578 (PHYD…LLQQ), 1582–1621 (AHKD…PVGE), and 1624–1661 (GHDS…DGQI). A Phosphoserine modification is found at Ser-1662. Phosphothreonine is present on Thr-1664. Position 1673 is a phosphoserine (Ser-1673).

Belongs to the TRAFAC class myosin-kinesin ATPase superfamily. Kinesin family. In terms of assembly, part of a cortical microtubule stabilization complex (CMSC) composed of KANK1, PPFIA1, PPFIBP1, ERC1/ELKS, PHLDB2/LL5beta, CLASPs, KIF21A and possibly additional interactors; within CMSCs KANK1 and PHLDB2/LL5beta seem to be the core components for recruiting microtubule-binding proteins KIF21A and CLASPs, whereas PPFIA1, PPFIBP1 and ERC1/ELKS serve as scaffolds for protein clustering. Interacts (via residues 1146-1167) with KANK1 (via ankyrin repeats 1-5) and KANK2 (via ankyrin repeats 1-5).

The protein resides in the cytoplasm. It is found in the cytoskeleton. Its subcellular location is the cell cortex. The protein localises to the cell projection. It localises to the axon. The protein resides in the dendrite. It is found in the growth cone. In terms of biological role, processive microtubule plus-end directed motor protein involved in neuronal axon guidance. Is recruited by KANK1 to cortical microtubule stabilizing complexes (CMSCs) at focal adhesions (FAs) rims where it promotes microtubule capture and stability. Controls microtubule polymerization rate at axonal growth cones and suppresses microtubule growth without inducing microtubule disassembly once it reaches the cell cortex. This is Kinesin-like protein KIF21A (KIF21A) from Homo sapiens (Human).